Consider the following 131-residue polypeptide: Leptin receptor overlapping transcript-like 1 (131 aa).

4 helical membrane-spanning segments follow: residues 7–27 (LISL…GCAL), 32–52 (KYWP…YCIA), 69–89 (LAIF…IVFA), and 100–120 (ALVL…FLVF).

The protein belongs to the OB-RGRP/VPS55 family. Interacts with RAB13. Widely expressed, with highest expression in heart, testis, adrenal gland, thymus, and spleen, and lowest expression in lung and skeletal muscle.

Its subcellular location is the membrane. Functionally, negatively regulates growth hormone (GH) receptor cell surface expression in liver. May play a role in liver resistance to GH during periods of reduced nutrient availability. In Homo sapiens (Human), this protein is Leptin receptor overlapping transcript-like 1 (LEPROTL1).